The following is a 499-amino-acid chain: Leukocyte immunoglobulin-like receptor subfamily A member 4 (499 aa).

A signal peptide spans 1-23 (MTLILTSLLFFGLSLGPRTRVQA). Ig-like C2-type domains follow at residues 24–118 (ENLL…LVVT), 123–213 (PTLS…SDPL), 224–313 (PSLL…DPLD), and 324–413 (PSLS…SEPL). Residues 24 to 446 (ENLLKPILWA…PHLQDYTVEN (423 aa)) lie on the Extracellular side of the membrane. C49 and C98 are oxidised to a cystine. N138 carries N-linked (GlcNAc...) asparagine glycosylation. C143 and C195 are joined by a disulfide. N-linked (GlcNAc...) asparagine glycans are attached at residues N239, N279, and N300. A disulfide bridge connects residues C244 and C295. Cysteines 344 and 395 form a disulfide. At Y404 the chain carries 3'-nitrotyrosine. Residues 447-467 (LIRMGVAGLVLLFLGILLFEA) traverse the membrane as a helical segment. Residues 468–499 (QHSQRSPPRCSQEANSRKDNAPFRVVEPWEQI) lie on the Cytoplasmic side of the membrane.

Interacts with FCER1G; this stabilizes the expression of both proteins at the cell membrane. Interacts with BST2; leads to activation of LILRA4-mediated signaling and down-regulation of the innate immune response to viral pathogens. As to expression, detected on plasmacytoid dendritic cells (at protein level). Detected on plasmacytoid dendritic cells, but not on monocytes or B cells.

It localises to the cell membrane. Functions coreceptor to limit the innate immune responses to viral infections; signaling occurs via FCER1G. Down-regulates the production of IFNA1, IFNA2, IFNA4, IFNB1 and TNF by plasmacytoid dendritic cells that have been exposed to influenza virus or cytidine-phosphate-guanosine (CpG) dinucleotides, indicating it functions as a negative regulator of TLR7 and TLR9 signaling cascades. Down-regulates interferon production in response to interaction with BST2 on HIV-1 infected cells. Activates a signaling cascade in complex with FCER1G that results in phosphorylation of Src family and Syk kinases and thereby triggers mobilization of intracellular Ca(2+). Does not interfere with the differentiation of plasmacytoid dendritic cells into antigen-presenting cells. This chain is Leukocyte immunoglobulin-like receptor subfamily A member 4, found in Homo sapiens (Human).